The chain runs to 249 residues: MIILKNENEIDLMRKAGKILGETLNLLKEKVRPGITTTELDRIAEEFITKHGATPSFKGLYGFPASLCISVNNQVIHGFPGSYELKDGDIVSIDCGVCLNGFHSDAARTFGVGNISEEAEKLIRITEESFFKGIEKAYVDNRLTDISNEIQQYVEANGFSVVRDFVGHGIGRKVHEDPEVPNFGRPGRGPKLMAGMVLAIEPMVNMGSYRVKTLDDGWTVVTADGKLSAHYENTVAILPNGPEILTLIK.

His-77 serves as a coordination point for substrate. A divalent metal cation is bound by residues Asp-94, Asp-105, and His-168. His-175 serves as a coordination point for substrate. Residues Glu-201 and Glu-232 each coordinate a divalent metal cation.

The protein belongs to the peptidase M24A family. Methionine aminopeptidase type 1 subfamily. In terms of assembly, monomer. Co(2+) serves as cofactor. It depends on Zn(2+) as a cofactor. Mn(2+) is required as a cofactor. Requires Fe(2+) as cofactor.

The catalysed reaction is Release of N-terminal amino acids, preferentially methionine, from peptides and arylamides.. Functionally, removes the N-terminal methionine from nascent proteins. The N-terminal methionine is often cleaved when the second residue in the primary sequence is small and uncharged (Met-Ala-, Cys, Gly, Pro, Ser, Thr, or Val). Requires deformylation of the N(alpha)-formylated initiator methionine before it can be hydrolyzed. This is Methionine aminopeptidase from Clostridium perfringens (strain 13 / Type A).